We begin with the raw amino-acid sequence, 341 residues long: Zinc transporter 6, chloroplastic (341 aa).

Residues 28–48 (IVAVFAIFLTSVFGVWGPVLL) form a helical membrane-spanning segment. The Cytoplasmic portion of the chain corresponds to 49-61 (AKYFHGKPLYDKA). The helical transmembrane segment at 62-82 (ILVIKCFAAGVILSTSLVHVL) threads the bilayer. The Lumenal portion of the chain corresponds to 83 to 102 (PEAFESLADCQVSSRHPWKD). The chain crosses the membrane as a helical span at residues 103 to 123 (FPFAGLVTMIGAITALLVDLT). The Cytoplasmic segment spans residues 124 to 179 (ASEHMGHGGGGGGDGGMEYMPVGKAVGGLEMKEGKCGADLEIQENSEEEIVKMKQR). The chain crosses the membrane as a helical span at residues 180 to 200 (LVSQVLEIGIIFHSVIIGVTM). Residues 201–211 (GMSQNKCTIRP) are Lumenal-facing. The chain crosses the membrane as a helical span at residues 212–232 (LIAALSFHQIFEGLGLGGCIA). Topologically, residues 233-243 (QAGFKAGTVVY) are cytoplasmic. A helical membrane pass occupies residues 244–264 (MCLMFAVTTPLGIVLGMVIFA). Residues 265–280 (ATGYDDQNPNALIMEG) lie on the Lumenal side of the membrane. A helical transmembrane segment spans residues 281 to 301 (LLGSFSSGILIYMALVDLIAL). Topologically, residues 302–320 (DFFHNKMLTTCGESGSRLK) are cytoplasmic. Residues 321-341 (KLCFVALVLGSASMSLLALWA) form a helical membrane-spanning segment.

Belongs to the ZIP transporter (TC 2.A.5) family.

It is found in the plastid. The protein resides in the chloroplast thylakoid membrane. In terms of biological role, may play a role in the transport of zinc in the plastids. The sequence is that of Zinc transporter 6, chloroplastic (ZIP6) from Arabidopsis thaliana (Mouse-ear cress).